Here is a 31-residue protein sequence, read N- to C-terminus: Cytochrome b6-f complex subunit 6 (31 aa).

The chain crosses the membrane as a helical span at residues 4–24; sequence ITSYFGFLLAALTITSVLFIG.

Belongs to the PetL family. As to quaternary structure, the 4 large subunits of the cytochrome b6-f complex are cytochrome b6, subunit IV (17 kDa polypeptide, PetD), cytochrome f and the Rieske protein, while the 4 small subunits are PetG, PetL, PetM and PetN. The complex functions as a dimer.

It localises to the plastid. The protein localises to the chloroplast thylakoid membrane. Its function is as follows. Component of the cytochrome b6-f complex, which mediates electron transfer between photosystem II (PSII) and photosystem I (PSI), cyclic electron flow around PSI, and state transitions. PetL is important for photoautotrophic growth as well as for electron transfer efficiency and stability of the cytochrome b6-f complex. The chain is Cytochrome b6-f complex subunit 6 from Lepidium virginicum (Virginia pepperweed).